We begin with the raw amino-acid sequence, 87 residues long: Small ribosomal subunit protein bS20 (87 aa).

Residues M1 to K22 form a disordered region.

The protein belongs to the bacterial ribosomal protein bS20 family.

Binds directly to 16S ribosomal RNA. This is Small ribosomal subunit protein bS20 from Ruegeria sp. (strain TM1040) (Silicibacter sp.).